Here is a 410-residue protein sequence, read N- to C-terminus: Elongation factor Tu, chloroplastic (410 aa).

In terms of domain architecture, tr-type G spans 10-214 (KPHVNIGTIG…NVDEYIPTPE (205 aa)). Residues 19 to 26 (GHVDHGKT) form a G1 region. 19-26 (GHVDHGKT) provides a ligand contact to GTP. Thr-26 contributes to the Mg(2+) binding site. Residues 60-64 (GITIN) are G2. The segment at 81–84 (DCPG) is G3. GTP is bound by residues 81–85 (DCPGH) and 136–139 (NKED). The G4 stretch occupies residues 136 to 139 (NKED). A G5 region spans residues 174–176 (SAL).

This sequence belongs to the TRAFAC class translation factor GTPase superfamily. Classic translation factor GTPase family. EF-Tu/EF-1A subfamily.

Its subcellular location is the plastid. It is found in the chloroplast stroma. It carries out the reaction GTP + H2O = GDP + phosphate + H(+). GTP hydrolase that promotes the GTP-dependent binding of aminoacyl-tRNA to the A-site of ribosomes during protein biosynthesis. This is Elongation factor Tu, chloroplastic (tufA) from Bigelowiella natans (Pedinomonas minutissima).